We begin with the raw amino-acid sequence, 148 residues long: Small ribosomal subunit protein eS6 (148 aa).

Belongs to the eukaryotic ribosomal protein eS6 family.

This chain is Small ribosomal subunit protein eS6, found in Pyrobaculum arsenaticum (strain DSM 13514 / JCM 11321 / PZ6).